A 103-amino-acid chain; its full sequence is MYAVIETGGKQFRVEEGKVLFVEKLDANVGDTVTIDKVLLVEKDGAVKVGTPVVDGAKALLKVVEHGKGEKIIVFKMKSKKNYRRKQGHRQPYTKVVVEAIQA.

This sequence belongs to the bacterial ribosomal protein bL21 family. In terms of assembly, part of the 50S ribosomal subunit. Contacts protein L20.

In terms of biological role, this protein binds to 23S rRNA in the presence of protein L20. The sequence is that of Large ribosomal subunit protein bL21 from Desulfitobacterium hafniense (strain DSM 10664 / DCB-2).